A 308-amino-acid polypeptide reads, in one-letter code: Aspartate carbamoyltransferase catalytic subunit (308 aa).

Residues Arg55 and Thr56 each contribute to the carbamoyl phosphate site. Residue Lys83 coordinates L-aspartate. Residues Arg105, His133, and Gln136 each contribute to the carbamoyl phosphate site. Residues Arg166 and Arg220 each coordinate L-aspartate. 2 residues coordinate carbamoyl phosphate: Gly261 and Pro262.

This sequence belongs to the aspartate/ornithine carbamoyltransferase superfamily. ATCase family. Heterododecamer (2C3:3R2) of six catalytic PyrB chains organized as two trimers (C3), and six regulatory PyrI chains organized as three dimers (R2).

It carries out the reaction carbamoyl phosphate + L-aspartate = N-carbamoyl-L-aspartate + phosphate + H(+). Its pathway is pyrimidine metabolism; UMP biosynthesis via de novo pathway; (S)-dihydroorotate from bicarbonate: step 2/3. In terms of biological role, catalyzes the condensation of carbamoyl phosphate and aspartate to form carbamoyl aspartate and inorganic phosphate, the committed step in the de novo pyrimidine nucleotide biosynthesis pathway. The polypeptide is Aspartate carbamoyltransferase catalytic subunit (Chlorobium phaeobacteroides (strain DSM 266 / SMG 266 / 2430)).